We begin with the raw amino-acid sequence, 785 residues long: Ubiquitin carboxyl-terminal hydrolase 1 (785 aa).

Disordered regions lie at residues 1-21 and 33-52; these read MPGV…SKKN and TKRA…ASEY. A compositionally biased stretch (polar residues) spans 7–16; the sequence is SESNGLSRGS. S16, S42, and S67 each carry phosphoserine. Positions 81–785 constitute a USP domain; the sequence is VGLNNLGNTC…TPYLLFYKKL (705 aa). The active-site Nucleophile is C90. Composition is skewed to basic and acidic residues over residues 258–275 and 286–298; these read EDFK…KSDT and LSKE…ENQR. Residues 258 to 336 are disordered; sequence EDFKEKLPKG…SPRPSQKKSR (79 aa). 2 positions are modified to phosphoserine: S313 and S475. H593 acts as the Proton acceptor in catalysis. A disordered region spans residues 693 to 723; it reads TAFAENRNSETSDTTGTHESDRNKESSDQTG. The span at 708 to 719 shows a compositional bias: basic and acidic residues; it reads GTHESDRNKESS. A Phosphoserine modification is found at S768.

The protein belongs to the peptidase C19 family. In terms of assembly, interacts with FANCD2 and PCNA. Interacts with WDR48. Interacts with ATAD5; the interaction regulates USP1-mediated PCNA deubiquitination. In terms of processing, autocatalytic cleavage of USP1 following UV irradiation inactivates it, leading to an increase in ubiquitinated PCNA, recruitment of POLH and translesion synthesis. Ubiquitinated by the CRL2(KLHDC2) complex following autocatalytic cleavage, leading to its degradation: the CRL2(KLHDC2) complex recognizes the diglycine (Gly-Gly) at the C-terminus.

It localises to the nucleus. The catalysed reaction is Thiol-dependent hydrolysis of ester, thioester, amide, peptide and isopeptide bonds formed by the C-terminal Gly of ubiquitin (a 76-residue protein attached to proteins as an intracellular targeting signal).. In terms of biological role, negative regulator of DNA damage repair which specifically deubiquitinates monoubiquitinated FANCD2. Also involved in PCNA-mediated translesion synthesis (TLS) by deubiquitinating monoubiquitinated PCNA. Has almost no deubiquitinating activity by itself and requires the interaction with WDR48 to have a high activity. This chain is Ubiquitin carboxyl-terminal hydrolase 1 (USP1), found in Homo sapiens (Human).